Reading from the N-terminus, the 236-residue chain is Hydroxyacylglutathione hydrolase (236 aa).

Zn(2+) is bound by residues histidine 52, histidine 54, aspartate 56, histidine 57, histidine 108, aspartate 125, and histidine 163.

Belongs to the metallo-beta-lactamase superfamily. Glyoxalase II family. Monomer. Zn(2+) is required as a cofactor.

It carries out the reaction an S-(2-hydroxyacyl)glutathione + H2O = a 2-hydroxy carboxylate + glutathione + H(+). Its pathway is secondary metabolite metabolism; methylglyoxal degradation; (R)-lactate from methylglyoxal: step 2/2. Its function is as follows. Thiolesterase that catalyzes the hydrolysis of S-D-lactoyl-glutathione to form glutathione and D-lactic acid. In Mannheimia succiniciproducens (strain KCTC 0769BP / MBEL55E), this protein is Hydroxyacylglutathione hydrolase.